The primary structure comprises 142 residues: Hemoglobin subunit alpha (142 aa).

An N-acetylserine modification is found at serine 1. A Globin domain is found at 1–142 (SLSDKDKAAV…VALALAERYR (142 aa)). Histidine 59 is a binding site for O2. Histidine 88 is a binding site for heme b.

This sequence belongs to the globin family. Hb1 is a heterotetramer of two alpha chains and two beta-1 chains, while Hb2 is a heterotetramer of two alpha chains and two beta-2 chains. In terms of tissue distribution, red blood cells.

Its function is as follows. Involved in oxygen transport from gills to the various peripheral tissues. This chain is Hemoglobin subunit alpha (hba), found in Cygnodraco mawsoni (Antarctic dragonfish).